Reading from the N-terminus, the 191-residue chain is Flagellar transcriptional regulator FlhC (191 aa).

Residues Cys139, Cys142, Cys159, and Cys162 each coordinate Zn(2+).

The protein belongs to the FlhC family. Heterohexamer composed of two FlhC and four FlhD subunits. Each FlhC binds a FlhD dimer, forming a heterotrimer, and a hexamer assembles by dimerization of two heterotrimers. Requires Zn(2+) as cofactor.

It is found in the cytoplasm. In terms of biological role, functions in complex with FlhD as a master transcriptional regulator that regulates transcription of several flagellar and non-flagellar operons by binding to their promoter region. Activates expression of class 2 flagellar genes, including fliA, which is a flagellum-specific sigma factor that turns on the class 3 genes. Also regulates genes whose products function in a variety of physiological pathways. The polypeptide is Flagellar transcriptional regulator FlhC (Enterobacter cloacae subsp. cloacae (strain ATCC 13047 / DSM 30054 / NBRC 13535 / NCTC 10005 / WDCM 00083 / NCDC 279-56)).